A 288-amino-acid polypeptide reads, in one-letter code: Solute carrier family 25 member 45 (288 aa).

Solcar repeat units follow at residues 1–83 (MPVE…TLLV), 97–191 (PSYM…LCRQ), and 199–286 (PSSA…LLRW). Helical transmembrane passes span 6 to 26 (FVAGWISGALGLVLGHPFDTV), 63 to 83 (IASIAVVNSVLFGVYSNTLLV), 100 to 120 (MHIFLAGCTGGFLQAYCLAPF), 166 to 186 (GAWALTLRDTPTVGIYFITYE), 202 to 222 (ATVLVAGGFAGIASWVAATPL), and 266 to 286 (SARAFPVNAVTFLSYEYLLRW).

It belongs to the mitochondrial carrier (TC 2.A.29) family.

The protein resides in the mitochondrion inner membrane. The polypeptide is Solute carrier family 25 member 45 (SLC25A45) (Homo sapiens (Human)).